Consider the following 308-residue polypeptide: Polyprenal reductase (308 aa).

Over 1-2 (MT) the chain is Cytoplasmic. A helical transmembrane segment spans residues 3-23 (LLALVWLLLDATFLITLLWHL). The Lumenal segment spans residues 24–65 (LQGCKSGHSLLCSVFQDLIRYGKTKTGLQRPAWLQWFDIPKR). The helical transmembrane segment at 66–86 (CFWHFYCVSLIWNGCLLWILL) threads the bilayer. The Cytoplasmic portion of the chain corresponds to 87–120 (RLLLQSVPVPEWLQLVLHFLHAGSEPQILDRELS). Residues 121 to 141 (VILALALLWLHSLRRLLECLF) traverse the membrane as a helical segment. At 142–148 (VSVFSNG) the chain is on the lumenal side. The chain crosses the membrane as a helical span at residues 149–169 (VIHLVQYCFGLGYYFLIGITV). Topologically, residues 170-184 (LTYCPLDRRTVSTDN) are cytoplasmic. A helical membrane pass occupies residues 185–205 (LLTQCHWYHILGLALYIWASL). Topologically, residues 206 to 255 (HQYRCHCILAGLRKSASGNVINLNHSVPCGDWFERVSCPHYFAELLIYVS) are lumenal. Residues 256–276 (IAVVFGLLNTIWWLVVLYVLL) traverse the membrane as a helical segment. Residues 277 to 308 (NQALAALLCHEFYHEKFDTYPIHRKAFIPFIF) lie on the Cytoplasmic side of the membrane.

It belongs to the steroid 5-alpha reductase family. Polyprenal reductase subfamily.

It is found in the endoplasmic reticulum membrane. It catalyses the reaction a di-trans,poly-cis-dolichal + NADP(+) = a di-trans,poly-cis-polyprenal + NADPH + H(+). The enzyme catalyses a 3-oxo-5alpha-steroid + NADP(+) = a 3-oxo-Delta(4)-steroid + NADPH + H(+). It carries out the reaction androst-4-ene-3,17-dione + NADPH + H(+) = 5alpha-androstan-3,17-dione + NADP(+). The catalysed reaction is 17beta-hydroxy-5alpha-androstan-3-one + NADP(+) = testosterone + NADPH + H(+). The protein operates within protein modification; protein glycosylation. Its function is as follows. Plays a key role in early steps of protein N-linked glycosylation by being involved in the conversion of polyprenol into dolichol. Acts as a polyprenal reductase that mediates the reduction of polyprenal into dolichal in a NADP-dependent mechanism. Dolichols are required for the synthesis of dolichol-linked monosaccharides and the oligosaccharide precursor used for N-glycosylation. Also able to convert testosterone (T) into 5-alpha-dihydrotestosterone (DHT). The protein is Polyprenal reductase (srd5a3) of Xenopus tropicalis (Western clawed frog).